The sequence spans 404 residues: Diaminopropionate ammonia-lyase (404 aa).

Lys-78 bears the N6-(pyridoxal phosphate)lysine mark.

This sequence belongs to the diaminopropionate ammonia-lyase family. Homodimer. It depends on pyridoxal 5'-phosphate as a cofactor.

The catalysed reaction is (S)-2,3-diaminopropanoate + H2O + H(+) = pyruvate + 2 NH4(+). The enzyme catalyses (R)-2,3-diaminopropanoate + H2O + H(+) = pyruvate + 2 NH4(+). Its activity is regulated as follows. Competitively inhibited by L- and D-alanine. In terms of biological role, catalyzes the alpha,beta-elimination reaction of both L- and D-alpha,beta-diaminopropionate (DAP) to form pyruvate and ammonia. In vitro L- and D-isomers of serine are also degraded, though slowly; it is the only serine dehydratase which can eliminate an amino group at the beta-carbon position. In vivo L-, D- and a mixure of DL-DAP allow growth. DL-DAP is toxic in the absence of this enzyme, it may inhibit enzymes involved in the synthesis of pyruvate and aspartate, as well as amino acids derived from them. The chain is Diaminopropionate ammonia-lyase (dpaL) from Salmonella typhimurium (strain LT2 / SGSC1412 / ATCC 700720).